The sequence spans 165 residues: Free methionine-R-sulfoxide reductase (165 aa).

One can recognise a GAF domain in the interval 49–149 (LLEDDTLVLG…LRQLVAQLEK (101 aa)).

Belongs to the free Met sulfoxide reductase family.

It carries out the reaction [thioredoxin]-disulfide + L-methionine + H2O = L-methionine (R)-S-oxide + [thioredoxin]-dithiol. In terms of biological role, catalyzes the reversible oxidation-reduction of the R-enantiomer of free methionine sulfoxide to methionine. Specific for free L-methionine-(R)-S-oxide. This Escherichia coli (strain K12) protein is Free methionine-R-sulfoxide reductase (msrC).